The primary structure comprises 310 residues: Glucan endo-1,3-beta-glucosidase GI (310 aa).

The active-site Proton donor is the Glu96. Glu234 (nucleophile) is an active-site residue.

This sequence belongs to the glycosyl hydrolase 17 family. Monomer. Young leaves and roots.

It catalyses the reaction Hydrolysis of (1-&gt;3)-beta-D-glucosidic linkages in (1-&gt;3)-beta-D-glucans.. Its function is as follows. May provide a degree of protection against microbial invasion of germinated barley grain through its ability to degrade fungal cell wall polysaccharides. Does not hydrolyze (1,3;1,4)-beta-D-glucans, (1,6)-beta-D-glucan, CM-cellulose, insoluble (1,3)-beta-D-glucans or aryl beta-D-glycosides. This is Glucan endo-1,3-beta-glucosidase GI from Hordeum vulgare (Barley).